The chain runs to 423 residues: Protein CLP1 homolog (423 aa).

ATP contacts are provided by residues E16, K57, and 119–124; that span reads DVGKST.

This sequence belongs to the Clp1 family. Clp1 subfamily.

It localises to the nucleus. In terms of biological role, required for endonucleolytic cleavage during polyadenylation-dependent pre-mRNA 3'-end formation. This Drosophila simulans (Fruit fly) protein is Protein CLP1 homolog (cbc).